The following is a 1399-amino-acid chain: DNA-directed RNA polymerase subunit beta' (1399 aa).

Zn(2+)-binding residues include cysteine 70, cysteine 72, cysteine 85, and cysteine 88. 3 residues coordinate Mg(2+): aspartate 460, aspartate 462, and aspartate 464. Zn(2+) is bound by residues cysteine 814, cysteine 888, cysteine 895, and cysteine 898.

Belongs to the RNA polymerase beta' chain family. The RNAP catalytic core consists of 2 alpha, 1 beta, 1 beta' and 1 omega subunit. When a sigma factor is associated with the core the holoenzyme is formed, which can initiate transcription. It depends on Mg(2+) as a cofactor. Requires Zn(2+) as cofactor.

The catalysed reaction is RNA(n) + a ribonucleoside 5'-triphosphate = RNA(n+1) + diphosphate. In terms of biological role, DNA-dependent RNA polymerase catalyzes the transcription of DNA into RNA using the four ribonucleoside triphosphates as substrates. The sequence is that of DNA-directed RNA polymerase subunit beta' from Pseudomonas putida (strain ATCC 700007 / DSM 6899 / JCM 31910 / BCRC 17059 / LMG 24140 / F1).